A 192-amino-acid polypeptide reads, in one-letter code: GTP-binding protein RHO2 (192 aa).

14–21 (GDGACGKT) is a binding site for GTP. The Effector region motif lies at 36-44 (YHPTVFENY). Residues 61–65 (DTAGQ) and 119–122 (LKKD) each bind GTP. C188 is lipidated: S-palmitoyl cysteine. C189 is modified (cysteine methyl ester). C189 is lipidated: S-geranylgeranyl cysteine. Residues 190–192 (IIL) constitute a propeptide, removed in mature form.

The protein belongs to the small GTPase superfamily. Rho family. In terms of assembly, interacts with BEM4.

The protein resides in the cell membrane. It carries out the reaction GTP + H2O = GDP + phosphate + H(+). The polypeptide is GTP-binding protein RHO2 (RHO2) (Saccharomyces cerevisiae (strain ATCC 204508 / S288c) (Baker's yeast)).